The primary structure comprises 165 residues: Sec-independent protein translocase protein TatB (165 aa).

A helical membrane pass occupies residues 1–21 (MFDVSFTELIVIGVVALIVLG). Polar residues predominate over residues 67-84 (DSTAQDVNQSLRSATDSL). Residues 67-165 (DSTAQDVNQS…PKSPSTGNAT (99 aa)) are disordered. The segment covering 127–159 (KLPGTPATLPATAAAEPTPAAPAASQAEAPKSP) has biased composition (low complexity).

The protein belongs to the TatB family. In terms of assembly, the Tat system comprises two distinct complexes: a TatABC complex, containing multiple copies of TatA, TatB and TatC subunits, and a separate TatA complex, containing only TatA subunits. Substrates initially bind to the TatABC complex, which probably triggers association of the separate TatA complex to form the active translocon.

The protein localises to the cell inner membrane. Functionally, part of the twin-arginine translocation (Tat) system that transports large folded proteins containing a characteristic twin-arginine motif in their signal peptide across membranes. Together with TatC, TatB is part of a receptor directly interacting with Tat signal peptides. TatB may form an oligomeric binding site that transiently accommodates folded Tat precursor proteins before their translocation. This chain is Sec-independent protein translocase protein TatB, found in Bordetella avium (strain 197N).